Consider the following 163-residue polypeptide: Large ribosomal subunit protein uL10 (163 aa).

It belongs to the universal ribosomal protein uL10 family. In terms of assembly, part of the ribosomal stalk of the 50S ribosomal subunit. The N-terminus interacts with L11 and the large rRNA to form the base of the stalk. The C-terminus forms an elongated spine to which L12 dimers bind in a sequential fashion forming a multimeric L10(L12)X complex.

Its function is as follows. Forms part of the ribosomal stalk, playing a central role in the interaction of the ribosome with GTP-bound translation factors. The sequence is that of Large ribosomal subunit protein uL10 from Histophilus somni (strain 2336) (Haemophilus somnus).